The sequence spans 292 residues: Elongation factor Ts (292 aa).

An involved in Mg(2+) ion dislocation from EF-Tu region spans residues 82 to 85 (TDFV).

This sequence belongs to the EF-Ts family.

It is found in the cytoplasm. In terms of biological role, associates with the EF-Tu.GDP complex and induces the exchange of GDP to GTP. It remains bound to the aminoacyl-tRNA.EF-Tu.GTP complex up to the GTP hydrolysis stage on the ribosome. The sequence is that of Elongation factor Ts from Bordetella parapertussis (strain 12822 / ATCC BAA-587 / NCTC 13253).